The chain runs to 280 residues: Phosphatidylserine decarboxylase proenzyme (280 aa).

Active-site charge relay system; for autoendoproteolytic cleavage activity residues include aspartate 88, histidine 144, and serine 247. Serine 247 (schiff-base intermediate with substrate; via pyruvic acid; for decarboxylase activity) is an active-site residue. A Pyruvic acid (Ser); by autocatalysis modification is found at serine 247.

It belongs to the phosphatidylserine decarboxylase family. PSD-B subfamily. Prokaryotic type I sub-subfamily. In terms of assembly, heterodimer of a large membrane-associated beta subunit and a small pyruvoyl-containing alpha subunit. The cofactor is pyruvate. Is synthesized initially as an inactive proenzyme. Formation of the active enzyme involves a self-maturation process in which the active site pyruvoyl group is generated from an internal serine residue via an autocatalytic post-translational modification. Two non-identical subunits are generated from the proenzyme in this reaction, and the pyruvate is formed at the N-terminus of the alpha chain, which is derived from the carboxyl end of the proenzyme. The autoendoproteolytic cleavage occurs by a canonical serine protease mechanism, in which the side chain hydroxyl group of the serine supplies its oxygen atom to form the C-terminus of the beta chain, while the remainder of the serine residue undergoes an oxidative deamination to produce ammonia and the pyruvoyl prosthetic group on the alpha chain. During this reaction, the Ser that is part of the protease active site of the proenzyme becomes the pyruvoyl prosthetic group, which constitutes an essential element of the active site of the mature decarboxylase.

It is found in the cell membrane. The catalysed reaction is a 1,2-diacyl-sn-glycero-3-phospho-L-serine + H(+) = a 1,2-diacyl-sn-glycero-3-phosphoethanolamine + CO2. Its pathway is phospholipid metabolism; phosphatidylethanolamine biosynthesis; phosphatidylethanolamine from CDP-diacylglycerol: step 2/2. In terms of biological role, catalyzes the formation of phosphatidylethanolamine (PtdEtn) from phosphatidylserine (PtdSer). This is Phosphatidylserine decarboxylase proenzyme from Stenotrophomonas maltophilia (strain R551-3).